Consider the following 551-residue polypeptide: MAKELRFGDDARQQMLAGVNALADRVKATMGPSGRNVVLERSFGAPTVTKDGVSVAKEIEFENRFKNMGAQMVKEVAAKTSDTAGDGTTTATVLARSIVVEGHKAVAAGMNPMDLKRGIDKAVTAITKELQKMSKPCKDGKAIAQVGTISANSDQAIGSIIAEAMEKVGKEGVITVEDGNGLENELSVVEGMQFDRGYISPYFINNQQNMSAELEHPFILLVDKKIATIRDMLSVLEAVAKSGRPLLIVAEDVEGEALATLVVNNMRGIVKVCAVKAPGFGDRRKAMLQDIAILTNGQVISEEIGTSLETASLESLGTAKRIVVTKENTTIIDGEGKATEINARIAQIRAQMEETSSDYDREKLQERVAKLAGGVAVIKVGAATEIEMKEKKARVEDALHATRAAVEEGIVAGGGVALIRAQKVLDGLKGDNADQDMGINILRRAIESPLRQIVANAGYESSVIVNKVAEHKDNFGFNAATGQYGDMVEMGILDPTKVTRTALQNAASVRSLMLTTECMVADLPKKDEGMAGAGDMGGMGGMGGMGGMGMM.

ATP is bound by residues 29-32, K50, 86-90, G414, 478-480, and D494; these read TMGP, DGTTT, and NAA.

It belongs to the chaperonin (HSP60) family. As to quaternary structure, forms a cylinder of 14 subunits composed of two heptameric rings stacked back-to-back. Interacts with the co-chaperonin GroES.

Its subcellular location is the cytoplasm. The catalysed reaction is ATP + H2O + a folded polypeptide = ADP + phosphate + an unfolded polypeptide.. Together with its co-chaperonin GroES, plays an essential role in assisting protein folding. The GroEL-GroES system forms a nano-cage that allows encapsulation of the non-native substrate proteins and provides a physical environment optimized to promote and accelerate protein folding. The sequence is that of Chaperonin GroEL from Legionella jeonii.